The following is a 400-amino-acid chain: MAKEKFVRTKPHVNVGTIGHIDHGKSTLTAAITKYLSLKGLAQYIPYDQIDKAPEEKARGITINITHVEYETEKRHYAHIDCPGHADYIKNMITGAAQMDGAILVVAATDGPMPQTREHVLLARQVEVPYMIVFINKTDMVDDPELIDLVEMEVRDLLSQYGYPGDEVPVIRGSALKAVEAPNDPNHEAYKPIQELLDAMDNYIPDPQRDVDKPFLMPIEDVFSITGRGTVVTGRIERGRIRPGDEVEIIGLSYEIKKTVVTSVEMFRKELDEGIAGDNVGCLLRGIDKDEVERGQVLAAPGSIKPHKRFKAQIYVLKKEEGGRHTPFTKGYKPQFYIRTADVTGEIVGLPEGVEMVMPGDHVEMEIELIYPVAIEKGQRFAVREGGRTVGAGVVTEVIE.

Residues 10 to 208 (KPHVNVGTIG…AMDNYIPDPQ (199 aa)) enclose the tr-type G domain. Residues 19-26 (GHIDHGKS) form a G1 region. 19 to 26 (GHIDHGKS) contacts GTP. S26 is a binding site for Mg(2+). The G2 stretch occupies residues 60–64 (GITIN). The G3 stretch occupies residues 81–84 (DCPG). Residues 81–85 (DCPGH) and 136–139 (NKTD) contribute to the GTP site. The interval 136-139 (NKTD) is G4. Residues 174-176 (SAL) form a G5 region.

It belongs to the TRAFAC class translation factor GTPase superfamily. Classic translation factor GTPase family. EF-Tu/EF-1A subfamily. Monomer.

The protein localises to the cytoplasm. It catalyses the reaction GTP + H2O = GDP + phosphate + H(+). In terms of biological role, GTP hydrolase that promotes the GTP-dependent binding of aminoacyl-tRNA to the A-site of ribosomes during protein biosynthesis. This Thermotoga maritima (strain ATCC 43589 / DSM 3109 / JCM 10099 / NBRC 100826 / MSB8) protein is Elongation factor Tu.